The sequence spans 70 residues: Sec-independent protein translocase protein TatA (70 aa).

A helical membrane pass occupies residues 1–21 (MGSFSVWHWLIVLVIVLVLFG). The disordered stretch occupies residues 42 to 70 (GMADEDQTPPPADANANAKTVDHKADEIK). A compositionally biased stretch (basic and acidic residues) spans 61-70 (TVDHKADEIK).

This sequence belongs to the TatA/E family. The Tat system comprises two distinct complexes: a TatABC complex, containing multiple copies of TatA, TatB and TatC subunits, and a separate TatA complex, containing only TatA subunits. Substrates initially bind to the TatABC complex, which probably triggers association of the separate TatA complex to form the active translocon.

It is found in the cell inner membrane. Functionally, part of the twin-arginine translocation (Tat) system that transports large folded proteins containing a characteristic twin-arginine motif in their signal peptide across membranes. TatA could form the protein-conducting channel of the Tat system. The sequence is that of Sec-independent protein translocase protein TatA from Agrobacterium fabrum (strain C58 / ATCC 33970) (Agrobacterium tumefaciens (strain C58)).